Reading from the N-terminus, the 243-residue chain is Ras-related protein Rab-12 (243 aa).

Position 1 is an N-acetylmethionine (Met-1). The tract at residues 1–36 (MDPSAALHRRPAGGSLGAVSPALSGGQARRRKQPPR) is disordered. 3 positions are modified to phosphoserine: Ser-15, Ser-20, and Ser-24. Residues Gly-51, Val-52, Gly-53, Lys-54, Thr-55, Ser-72, and Thr-73 each contribute to the GTP site. Thr-55 serves as a coordination point for Mg(2+). 2 consecutive short sequence motifs (switch) follow at residues 64–78 (DTFCEACKSTVGVDF) and 96–113 (DTAGQERFNSITSAYYRS). Residues Thr-73 and Asp-96 each contribute to the Mg(2+) site. Residue Gly-99 participates in GTP binding. Ser-105 is modified (phosphoserine; by LRRK2). GTP-binding residues include Asn-154, Lys-155, Asp-157, Ser-185, Ala-186, and Lys-187. 2 S-geranylgeranyl cysteine lipidation sites follow: Cys-242 and Cys-243.

It belongs to the small GTPase superfamily. Rab family. Interacts with RABIF and OPTN. Interacts with LRRK2; interaction facilitates phosphorylation of Ser-105. Interacts with GDI1, GDI2, CHM and CHML; these interactions are disrupted by phosphorylation on Ser-105. Interacts with RILPL1 and RILPL2; these interactions are dependent on phosphorylation of Ser-105. Mg(2+) is required as a cofactor. In terms of processing, phosphorylation of Ser-105 in the switch II region by LRRK2 prevents the association of RAB regulatory proteins, including CHM, CHML and RAB GDP dissociation inhibitors GDI1 and GDI2. In terms of tissue distribution, ubiquitously expressed.

It localises to the recycling endosome membrane. Its subcellular location is the lysosome membrane. The protein resides in the golgi apparatus membrane. It is found in the cytoplasmic vesicle. The protein localises to the autophagosome. It carries out the reaction GTP + H2O = GDP + phosphate + H(+). Its activity is regulated as follows. Regulated by guanine nucleotide exchange factors (GEFs) including DENND3 which promote the exchange of bound GDP for free GTP. Regulated by GTPase activating proteins (GAPs) which increase the GTP hydrolysis activity. Inhibited by GDP dissociation inhibitors (GDIs). The small GTPases Rab are key regulators of intracellular membrane trafficking, from the formation of transport vesicles to their fusion with membranes. Rabs cycle between an inactive GDP-bound form and an active GTP-bound form that is able to recruit to membranes different set of downstream effectors directly responsible for vesicle formation, movement, tethering and fusion. RAB12 may play a role in protein transport from recycling endosomes to lysosomes regulating, for instance, the degradation of the transferrin receptor. Involved in autophagy. The protein is Ras-related protein Rab-12 of Mus musculus (Mouse).